Reading from the N-terminus, the 172-residue chain is Type IV secretion system putative outer membrane lipoprotein BMEII0036 (172 aa).

Positions 1–15 (MRTLVMVACAVSLAA) are cleaved as a signal peptide. Cys-16 carries N-palmitoyl cysteine lipidation. A lipid anchor (S-diacylglycerol cysteine) is attached at Cys-16. The region spanning 58–172 (WPARPPKQTV…RRVDIEILRK (115 aa)) is the OmpA-like domain.

Its subcellular location is the cell outer membrane. The polypeptide is Type IV secretion system putative outer membrane lipoprotein BMEII0036 (Brucella melitensis biotype 1 (strain ATCC 23456 / CCUG 17765 / NCTC 10094 / 16M)).